The chain runs to 376 residues: tRNA-specific 2-thiouridylase MnmA (376 aa).

Residues 14–21 and M40 each bind ATP; that span reads GMSGGVDS. The segment at 100–102 is interaction with target base in tRNA; it reads NPD. Catalysis depends on C105, which acts as the Nucleophile. The cysteines at positions 105 and 202 are disulfide-linked. G129 serves as a coordination point for ATP. An interaction with tRNA region spans residues 152-154; that stretch reads KDQ. The active-site Cysteine persulfide intermediate is C202. An interaction with tRNA region spans residues 315 to 316; sequence RY.

It belongs to the MnmA/TRMU family.

The protein resides in the cytoplasm. It catalyses the reaction S-sulfanyl-L-cysteinyl-[protein] + uridine(34) in tRNA + AH2 + ATP = 2-thiouridine(34) in tRNA + L-cysteinyl-[protein] + A + AMP + diphosphate + H(+). Its function is as follows. Catalyzes the 2-thiolation of uridine at the wobble position (U34) of tRNA, leading to the formation of s(2)U34. This is tRNA-specific 2-thiouridylase MnmA from Lactococcus lactis subsp. cremoris (strain SK11).